The primary structure comprises 420 residues: 3-isopropylmalate dehydratase large subunit (420 aa).

[4Fe-4S] cluster is bound by residues C301, C361, and C364.

The protein belongs to the aconitase/IPM isomerase family. LeuC type 2 subfamily. In terms of assembly, heterodimer of LeuC and LeuD. Requires [4Fe-4S] cluster as cofactor.

The enzyme catalyses (2R,3S)-3-isopropylmalate = (2S)-2-isopropylmalate. Its pathway is amino-acid biosynthesis; L-leucine biosynthesis; L-leucine from 3-methyl-2-oxobutanoate: step 2/4. In terms of biological role, catalyzes the isomerization between 2-isopropylmalate and 3-isopropylmalate, via the formation of 2-isopropylmaleate. The polypeptide is 3-isopropylmalate dehydratase large subunit (Desulfovibrio desulfuricans (strain ATCC 27774 / DSM 6949 / MB)).